Consider the following 559-residue polypeptide: Spermidine/putrescine import ATP-binding protein PotA (559 aa).

The 442-residue stretch at 7 to 448 folds into the ABC transporter domain; the sequence is IEIEGLNKTF…PKTEWIANFI (442 aa). ATP is bound at residue 40-47; sequence GPSGCGKT. Residues 108-317 are insert; it reads WTKLDEIPKL…EAFEKRYLSR (210 aa).

This sequence belongs to the ABC transporter superfamily. Spermidine/putrescine importer (TC 3.A.1.11.1) family. In terms of assembly, the complex is composed of two ATP-binding proteins (PotA), two transmembrane proteins (PotB and PotC) and a solute-binding protein (PotD).

It is found in the cell membrane. It carries out the reaction ATP + H2O + polyamine-[polyamine-binding protein]Side 1 = ADP + phosphate + polyamineSide 2 + [polyamine-binding protein]Side 1.. Functionally, part of the ABC transporter complex PotABCD involved in spermidine/putrescine import. Responsible for energy coupling to the transport system. This chain is Spermidine/putrescine import ATP-binding protein PotA, found in Mycoplasma genitalium (strain ATCC 33530 / DSM 19775 / NCTC 10195 / G37) (Mycoplasmoides genitalium).